The sequence spans 388 residues: tRNA (guanine(26)-N(2))-dimethyltransferase (388 aa).

One can recognise a Trm1 methyltransferase domain in the interval 7-381; it reads KTVEEGLTKI…APLKKIKEII (375 aa). S-adenosyl-L-methionine is bound by residues arginine 40, arginine 70, aspartate 88, aspartate 115, and alanine 116. Positions 248, 251, 268, and 271 each coordinate Zn(2+).

It belongs to the class I-like SAM-binding methyltransferase superfamily. Trm1 family.

The catalysed reaction is guanosine(26) in tRNA + 2 S-adenosyl-L-methionine = N(2)-dimethylguanosine(26) in tRNA + 2 S-adenosyl-L-homocysteine + 2 H(+). Its function is as follows. Dimethylates a single guanine residue at position 26 of a number of tRNAs using S-adenosyl-L-methionine as donor of the methyl groups. This chain is tRNA (guanine(26)-N(2))-dimethyltransferase, found in Methanobrevibacter smithii (strain ATCC 35061 / DSM 861 / OCM 144 / PS).